The sequence spans 409 residues: Shaggy-related protein kinase NtK-1 (409 aa).

Residues 1-27 (MTSVGLAPVSGLRESSSHSVGVDRLPE) form a disordered region. In terms of domain architecture, Protein kinase spans 73 to 357 (YMAERIVGQG…ALEAVTHAFF (285 aa)). ATP is bound by residues 79 to 87 (VGQGSFGVV) and lysine 102. The active-site Proton acceptor is aspartate 198.

It belongs to the protein kinase superfamily. CMGC Ser/Thr protein kinase family. GSK-3 subfamily. Autophosphorylated mainly on threonine and serine residues.

It carries out the reaction L-seryl-[protein] + ATP = O-phospho-L-seryl-[protein] + ADP + H(+). It catalyses the reaction L-threonyl-[protein] + ATP = O-phospho-L-threonyl-[protein] + ADP + H(+). Functionally, may mediate extracellular signals to regulate transcription in differentiating cells. The sequence is that of Shaggy-related protein kinase NtK-1 (NTK-1) from Nicotiana tabacum (Common tobacco).